The primary structure comprises 435 residues: Glutamyl-tRNA reductase (435 aa).

Residues 49–52 (TCNR), Ser109, 114–116 (EGQ), and Gln120 contribute to the substrate site. Cys50 (nucleophile) is an active-site residue. Residue 198–203 (GAGRMS) participates in NADP(+) binding.

This sequence belongs to the glutamyl-tRNA reductase family. As to quaternary structure, homodimer.

The enzyme catalyses (S)-4-amino-5-oxopentanoate + tRNA(Glu) + NADP(+) = L-glutamyl-tRNA(Glu) + NADPH + H(+). It functions in the pathway porphyrin-containing compound metabolism; protoporphyrin-IX biosynthesis; 5-aminolevulinate from L-glutamyl-tRNA(Glu): step 1/2. The protein operates within porphyrin-containing compound metabolism; chlorophyll biosynthesis. Its function is as follows. Catalyzes the NADPH-dependent reduction of glutamyl-tRNA(Glu) to glutamate 1-semialdehyde (GSA). This is Glutamyl-tRNA reductase from Prochlorococcus marinus (strain MIT 9211).